Consider the following 350-residue polypeptide: MNNTIYILGAGSIGSLLAYELASLKSINNRVILLLRDKSRVNSFKDKNSTLKIDRLFEENVPHLCCQVTASEPSQLNVQSIENMIVTTKAGQTENALSKYLPYLSKNSNILFVQNGMGAVENVCGKLWPEEQNKPSIYQGVISHGCFQTAPFHFSHAGLGDLKISKVPKNPKKILPDEAAETPCEMIKSLGKSELLRLRYMNYPELLVNQCEKLVINACINPTTATLDCVNGELYNDESAKELFRCIIKECVDIFFKCIPLFKNNEEAEKILNVNRLLDRVMFVGTKVNGANSSSTRQDCLLLRETEIDAINGYVVKLAENNGFQATVNKTMMLLTKSRLGLNRCRAHAR.

NADP(+)-binding positions include glycine 9–glycine 14 and asparagine 115. Asparagine 115 is a substrate binding site. The active-site Proton donor is lysine 213. Substrate-binding residues include asparagine 217, asparagine 221, and serine 295. Residue glutamate 307 participates in NADP(+) binding.

It belongs to the ketopantoate reductase family.

The catalysed reaction is (R)-pantoate + NADP(+) = 2-dehydropantoate + NADPH + H(+). The protein operates within cofactor biosynthesis; (R)-pantothenate biosynthesis; (R)-pantoate from 3-methyl-2-oxobutanoate: step 2/2. In terms of biological role, catalyzes the NADPH-dependent reduction of ketopantoate into pantoic acid. This Schizosaccharomyces pombe (strain 972 / ATCC 24843) (Fission yeast) protein is Probable 2-dehydropantoate 2-reductase.